A 119-amino-acid polypeptide reads, in one-letter code: MPRVKRGVTARARHKKVLALAKGFRGRRGNVFRIAKQAVMKAGQYAYRDRRTKKRVFRQLWIARINAAARELGLTYSQFANGLKKAAIEIDRKMLADLAVHDKAAFGSIVEQVKARLAV.

It belongs to the bacterial ribosomal protein bL20 family.

Functionally, binds directly to 23S ribosomal RNA and is necessary for the in vitro assembly process of the 50S ribosomal subunit. It is not involved in the protein synthesizing functions of that subunit. This Verminephrobacter eiseniae (strain EF01-2) protein is Large ribosomal subunit protein bL20.